The primary structure comprises 290 residues: Light-independent protochlorophyllide reductase iron-sulfur ATP-binding protein (290 aa).

ATP is bound by residues 10 to 15 (GIGKST) and Lys39. Ser14 provides a ligand contact to Mg(2+). [4Fe-4S] cluster is bound by residues Cys95 and Cys129. 180–181 (NR) contacts ATP.

It belongs to the NifH/BchL/ChlL family. In terms of assembly, homodimer. Protochlorophyllide reductase is composed of three subunits; ChlL, ChlN and ChlB. Requires [4Fe-4S] cluster as cofactor.

The protein localises to the plastid. The protein resides in the chloroplast. It carries out the reaction chlorophyllide a + oxidized 2[4Fe-4S]-[ferredoxin] + 2 ADP + 2 phosphate = protochlorophyllide a + reduced 2[4Fe-4S]-[ferredoxin] + 2 ATP + 2 H2O. It participates in porphyrin-containing compound metabolism; chlorophyll biosynthesis (light-independent). Functionally, component of the dark-operative protochlorophyllide reductase (DPOR) that uses Mg-ATP and reduced ferredoxin to reduce ring D of protochlorophyllide (Pchlide) to form chlorophyllide a (Chlide). This reaction is light-independent. The L component serves as a unique electron donor to the NB-component of the complex, and binds Mg-ATP. The protein is Light-independent protochlorophyllide reductase iron-sulfur ATP-binding protein of Cycas taitungensis (Prince sago).